A 314-amino-acid polypeptide reads, in one-letter code: Probable tRNA pseudouridine synthase B (314 aa).

A compositionally biased stretch (basic residues) spans 1–10; that stretch reads MATRGRHRSR. The interval 1–30 is disordered; sequence MATRGRHRSRTSGTSSEPMTLRAPPDERDL. Asp72 acts as the Nucleophile in catalysis. One can recognise a PUA domain in the interval 237-314; the sequence is LPRVTIAPSA…LVVELDRMLV (78 aa).

Belongs to the pseudouridine synthase TruB family. Type 2 subfamily.

It catalyses the reaction uridine(55) in tRNA = pseudouridine(55) in tRNA. Could be responsible for synthesis of pseudouridine from uracil-55 in the psi GC loop of transfer RNAs. In Haloarcula marismortui (strain ATCC 43049 / DSM 3752 / JCM 8966 / VKM B-1809) (Halobacterium marismortui), this protein is Probable tRNA pseudouridine synthase B.